Reading from the N-terminus, the 584-residue chain is Insulin-like growth factor 2 mRNA-binding protein 3 (584 aa).

RRM domains are found at residues 2–75 and 81–156; these read NKLY…HSVP and RKLQ…YIPD. A disordered region spans residues 160-199; it reads AQQPPQQHPQGRRGFGQRGPPRQGSPSATTRQKPQSDVPL. Polar residues predominate over residues 184–194; the sequence is SPSATTRQKPQ. KH domains are found at residues 196 to 261, 277 to 344, 409 to 474, and 491 to 557; these read DVPL…CKII, EIPL…EEEI, SETV…QGRI, and KLEA…QRKI.

Belongs to the RRM IMP/VICKZ family. As to quaternary structure, homodimer and multimer.

Its subcellular location is the cytoplasm. It is found in the nucleus. It localises to the P-body. The protein resides in the stress granule. Its function is as follows. RNA-binding factor that may recruit target transcripts to cytoplasmic protein-RNA complexes (mRNPs). This transcript 'caging' into mRNPs allows mRNA transport and transient storage. It also modulates the rate and location at which target transcripts encounter the translational apparatus and shields them from endonuclease attacks or microRNA-mediated degradation. Preferentially binds to N6-methyladenosine (m6A)-containing mRNAs and increases their stability. In Gallus gallus (Chicken), this protein is Insulin-like growth factor 2 mRNA-binding protein 3 (IGF2BP3).